Consider the following 203-residue polypeptide: Probable NADPH:quinone oxidoreductase 2 (203 aa).

Belongs to the SsuE family. Homotetramer. Requires FMN as cofactor.

It carries out the reaction a quinone + NADH + H(+) = a quinol + NAD(+). It catalyses the reaction a quinone + NADPH + H(+) = a quinol + NADP(+). Its function is as follows. The enzyme apparently serves as a quinone reductase in connection with conjugation reactions of hydroquinones involved in detoxification pathways. This chain is Probable NADPH:quinone oxidoreductase 2, found in Oryza sativa subsp. japonica (Rice).